A 389-amino-acid chain; its full sequence is Probable acyl-CoA dehydrogenase fadE25 (389 aa).

Belongs to the acyl-CoA dehydrogenase family. The cofactor is FAD.

It carries out the reaction a 2,3-saturated acyl-CoA + A = a 2,3-dehydroacyl-CoA + AH2. The sequence is that of Probable acyl-CoA dehydrogenase fadE25 (fadE25) from Mycobacterium bovis (strain ATCC BAA-935 / AF2122/97).